The chain runs to 548 residues: MTELTISSADISGAIEQYVATFSADPTREEIGIVSDAGDGIAHVEGLPSVMTQELLEFPGGVLGVALNLDERSVGTVVLGDFQDIEEGQQVKRTGEVLSVPVGDAFLGRVINPLGQPIDGRGDIEAETRRALELQAPSVVQRQSVSEPLQTGIKAIDSQTPIGRGQRQLIIGDRKTGKTAVCIDTILNQKQAWETGDPAQQVRCIYVAVGQKGSTVAAVRRTLDEAGALEYTTIVAAPASDAAGFKWLAPYTGSALGQHWMYQGKHVLIVFDDLTKQAEAYRAISLLLRRPPGREAYPGDVFYLHSRLLERCAKLSDELGAGSLTGLPIIETKANDISAYIPTNVISITDGQCFLQTDLFNQGVRPAVNVGVSVSRVGGAAQIKAMKEVAGSLRLELSQYRELEAFAAFASDLDATSKAQLERGARLVELLKQPQNSPYPVEEQVVAIYLGTGGHLDSVPVEDVMRFEQEFLDHVRGSHADILADIRETKKFSEDTETKLTNAVNAFKKSFAATDGSSVEVKGVAAEALDESAVGQETVQVRKPAPKK.

An ATP-binding site is contributed by 172-179 (GDRKTGKT).

Belongs to the ATPase alpha/beta chains family. As to quaternary structure, F-type ATPases have 2 components, CF(1) - the catalytic core - and CF(0) - the membrane proton channel. CF(1) has five subunits: alpha(3), beta(3), gamma(1), delta(1), epsilon(1). CF(0) has three main subunits: a(1), b(2) and c(9-12). The alpha and beta chains form an alternating ring which encloses part of the gamma chain. CF(1) is attached to CF(0) by a central stalk formed by the gamma and epsilon chains, while a peripheral stalk is formed by the delta and b chains.

Its subcellular location is the cell membrane. It carries out the reaction ATP + H2O + 4 H(+)(in) = ADP + phosphate + 5 H(+)(out). Its function is as follows. Produces ATP from ADP in the presence of a proton gradient across the membrane. The alpha chain is a regulatory subunit. This is ATP synthase subunit alpha from Mycobacteroides abscessus (strain ATCC 19977 / DSM 44196 / CCUG 20993 / CIP 104536 / JCM 13569 / NCTC 13031 / TMC 1543 / L948) (Mycobacterium abscessus).